The primary structure comprises 322 residues: Carnosine N-methyltransferase 2 (322 aa).

Substrate is bound at residue Glu58. Positions 90, 119, 150, and 172 each coordinate S-adenosyl-L-methionine. A substrate-binding site is contributed by Asn313.

It belongs to the class I-like SAM-binding methyltransferase superfamily. HNMT family. As to quaternary structure, monomer.

It catalyses the reaction carnosine + S-adenosyl-L-methionine = anserine + S-adenosyl-L-homocysteine + H(+). Functionally, N-methyltransferase that mediates the formation of anserine (beta-alanyl-N(Pi)-methyl-L-histidine) from carnosine. Anserine, a methylated derivative of carnosine (beta-alanyl-L-histidine), is an abundant constituent of vertebrate skeletal muscles. The protein is Carnosine N-methyltransferase 2 of Gallus gallus (Chicken).